A 588-amino-acid chain; its full sequence is Zeta-carotene desaturase, chloroplastic/chromoplastic (588 aa).

Belongs to the zeta carotene desaturase family. Requires NAD(+) as cofactor. NADP(+) serves as cofactor. FAD is required as a cofactor.

It is found in the plastid. The protein localises to the chloroplast. It localises to the chromoplast. The catalysed reaction is 9,9'-di-cis-zeta-carotene + 2 a quinone = 7,7',9,9'-tetra-cis-lycopene + 2 a quinol. It functions in the pathway carotenoid biosynthesis; lycopene biosynthesis. Functionally, catalyzes the conversion of zeta-carotene to lycopene via the intermediary of neurosporene. It carries out two consecutive desaturations (introduction of double bonds) at positions C-7 and C-7'. In Solanum lycopersicum (Tomato), this protein is Zeta-carotene desaturase, chloroplastic/chromoplastic (ZDS).